The primary structure comprises 196 residues: Peptide methionine sulfoxide reductase (196 aa).

Positions methionine 1–proline 14 are enriched in polar residues. The interval methionine 1–proline 23 is disordered.

The protein belongs to the MsrA Met sulfoxide reductase family.

The enzyme catalyses L-methionyl-[protein] + [thioredoxin]-disulfide + H2O = L-methionyl-(S)-S-oxide-[protein] + [thioredoxin]-dithiol. It carries out the reaction [thioredoxin]-disulfide + L-methionine + H2O = L-methionine (S)-S-oxide + [thioredoxin]-dithiol. In terms of biological role, has an important function as a repair enzyme for proteins that have been inactivated by oxidation. Catalyzes the reversible oxidation-reduction of methionine sulfoxide in proteins to methionine. This chain is Peptide methionine sulfoxide reductase (E4), found in Solanum lycopersicum (Tomato).